A 967-amino-acid chain; its full sequence is RNA polymerase II C-terminal domain phosphatase-like 1 (967 aa).

Positions Arg38–Lys41 match the Nuclear localization signal (NLS) motif. Residues Leu151 to Val401 enclose the FCP1 homology domain. Disordered stretches follow at residues Ser548–Arg611 and Met643–Asp712. Pro residues predominate over residues Pro590–Ala603. Basic and acidic residues predominate over residues Arg665–Leu684. 2 consecutive DRBM domains span residues Thr724 to Asp792 and Gly855 to Ser925. The segment at Gly928–Ser967 is disordered. A required for nuclear localization (NLS) region spans residues Ser945–Ser967. The Nuclear localization signal (NLS) motif lies at Lys947 to Pro951. Residues Arg955–Ser967 are compositionally biased toward polar residues.

Interacts with FREE1, ANAC019, MYB3, MYB4 and MYB32. Binds to DMS3. Interacts with RCF3. Interacts with RS40 and RS41. Interacts with EIF4A3. Interacts with UPF3. Mg(2+) serves as cofactor. The cofactor is Co(2+). Requires Mn(2+) as cofactor. As to expression, expressed at very low levels in roots, leaves, stems, flowers and siliques.

It localises to the nucleus. It is found in the nucleus speckle. The enzyme catalyses O-phospho-L-seryl-[protein] + H2O = L-seryl-[protein] + phosphate. It catalyses the reaction O-phospho-L-threonyl-[protein] + H2O = L-threonyl-[protein] + phosphate. Its function is as follows. Processively dephosphorylates 'Ser-5' but not 'Ser-2' of the heptad repeats YSPTSPS in the C-terminal domain of the largest RNA polymerase II subunit (RPB1). This promotes the activity of RNA polymerase II. Together with CPL2, required for male gametes fertility. Multifunctional regulator that modulates plant growth, stress, and phytohormones responses. Negative regulator of stress gene transcription involved in abscisic acid (ABA) mediated and jasmonic acid (JA) mediated signaling pathways, NaCl, osmotic stress, wounding, and cold resistance. Negatively regulates the expression of jasmonic acid (JA) biosynthetic genes in response to wounding. Forms a complex with RCF3 that modulates co-transcriptional processes such as mRNA capping and polyadenylation, and functions to repress stress-inducible gene expression. Dephosphorylates RCF3. Involved in the dephosphorylation of EIF4A3. This dephosphorylation retains EIF4A3 in the nucleus and limits its accumulation in the cytoplasm. Is essential for the degradation of the nonsense-mediated mRNA decay (NMD) transcripts. In Arabidopsis thaliana (Mouse-ear cress), this protein is RNA polymerase II C-terminal domain phosphatase-like 1.